Reading from the N-terminus, the 580-residue chain is MAILKDTIIRYANARYATASGTSTATAASVSAASCPNLPLLLQKRRAIASAKSKNPNLVKRELQAHHSAISEYNNDQLDHYFRLSHTERPLYNLTNFNSQPQVNPKMRFLIFDFIMYCHTRLNLSTSTLFLTFTILDKYSSRFIIKSYNYQLLSLTALWISSKFWDSKNRMATLKVLQNLCCNQYSIKQFTTMEMHLFKSLDWSICQSATFDSYIDIFLFQSTSPLSPGVVLSAPLEAFIQQKLALLNNAAGTAINKSSSSQGPSLNINEIKLGAIMLCELASFNLELSFKYDRSLIALGAINLIKLSLNYYNSNLWENINLALEENCQDLDIKLSEISNTLLDIAMDQNSFPSSFKSKYLNSNKTSLAKSLLDALQNYCIQLKLEEFYRSQELETMYNTIFAQSFDSDSLTCVYSNATTPKSATVSSAATDYFSDHTHLRRLTKDSISPPFAFTPTSSSSSPSPFNSPYKTSSSMTTPDSASHHSHSGSFSSTQNSFKRSLSIPQNSSIFWPSPLTPTTPSLMSNRKLLQNLSVRSKRLFPVRPMATAHPCSAPTQLKKRSTSSVDCDFNDSSNLKKTR.

Residues 454 to 469 show a composition bias toward low complexity; the sequence is FTPTSSSSSPSPFNSP. 2 disordered regions span residues 454–498 and 546–580; these read FTPT…QNSF and MATA…KKTR. Composition is skewed to polar residues over residues 470–480 and 563–580; these read YKTSSSMTTPD and TSSV…KKTR.

The protein belongs to the cyclin family.

Functionally, essential for the control of the cell cycle at the G1/S (start) transition. CLN3 may be an upstream activator of the G1 cyclins which directly catalyze start. The sequence is that of G1/S-specific cyclin CLN3 (CLN3) from Saccharomyces cerevisiae (strain ATCC 204508 / S288c) (Baker's yeast).